Consider the following 258-residue polypeptide: uncharacterized protein (258 aa).

This is an uncharacterized protein from Acidianus filamentous virus 2 (isolate Italy/Pozzuoli) (AFV-2).